The following is a 366-amino-acid chain: Phenylalanine--tRNA ligase alpha subunit (366 aa).

A Mg(2+)-binding site is contributed by E259.

The protein belongs to the class-II aminoacyl-tRNA synthetase family. Phe-tRNA synthetase alpha subunit type 1 subfamily. As to quaternary structure, tetramer of two alpha and two beta subunits. Mg(2+) serves as cofactor.

It localises to the cytoplasm. It catalyses the reaction tRNA(Phe) + L-phenylalanine + ATP = L-phenylalanyl-tRNA(Phe) + AMP + diphosphate + H(+). The protein is Phenylalanine--tRNA ligase alpha subunit of Erythrobacter litoralis (strain HTCC2594).